The sequence spans 633 residues: MLSKVLLNIAFKVLLTTAKRAVDPDDDDELLPSPDLPGSDDPIAGDPDVDLNPVTEEMFSSWALFIMLLLLISALWSSYYLTQKRIRAVHETVLSIFYGMVIGLIIRMSPGHYIQDTVTFNSSYFFNVLLPPIILNSGYELNQVNFFNNMLSILIFAIPGTFISAVVIGIILYIWTFLGLESIDISFADAMSVGATLSATDPVTILSIFNAYKVDPKLYTIIFGESLLNDAISIVMFETCQKFHGQPATFSSVFEGAGLFLMTFSVSLLIGVLIGILVALLLKHTHIRRYPQIESCLILLIAYESYFFSNGCHMSGIVSLLFCGITLKHYAYYNMSRRSQITIKYIFQLLARLSENFIFIYLGLELFTEVELVYKPLLIIVAAISICVARWCAVFPLSQFVNWIYRVKTIRSMSGITGENISVPDEIPYNYQMMTFWAGLRGAVGVALALGIQGEYKFTLLATVLVVVVLTVIIFGGTTAGMLEVLNIKTGCISEEDTSDDEFDIEAPRAINLLNGSSIQTDLGPYSDNNSPDISIDQFAVSSNKNLPNNISTTGGNTFGGLNETENTSPNPARSSMDKRNLRDKLGTIFNSDSQWFQNFDEQVLKPVFLDNVSPSLQDSATQSPADFSSQNH.

An N-terminal signal peptide occupies residues 1-21 (MLSKVLLNIAFKVLLTTAKRA). Over 22-61 (VDPDDDDELLPSPDLPGSDDPIAGDPDVDLNPVTEEMFSS) the chain is Lumenal. Residues 25–44 (DDDDELLPSPDLPGSDDPIA) are disordered. Residues 31-42 (LPSPDLPGSDDP) are compositionally biased toward low complexity. Residues 62 to 82 (WALFIMLLLLISALWSSYYLT) traverse the membrane as a helical segment. Residues 83 to 85 (QKR) lie on the Cytoplasmic side of the membrane. Residues 86–106 (IRAVHETVLSIFYGMVIGLII) traverse the membrane as a helical segment. The Lumenal segment spans residues 107 to 117 (RMSPGHYIQDT). The chain crosses the membrane as a helical span at residues 118–138 (VTFNSSYFFNVLLPPIILNSG). Positions 124–133 (YFFNVLLPPI) match the Amiloride-binding motif. Over 139 to 152 (YELNQVNFFNNMLS) the chain is Cytoplasmic. Residues 153–173 (ILIFAIPGTFISAVVIGIILY) traverse the membrane as a helical segment. At 174 to 189 (IWTFLGLESIDISFAD) the chain is on the lumenal side. A helical transmembrane segment spans residues 190–211 (AMSVGATLSATDPVTILSIFNA). Residues 212–217 (YKVDPK) lie on the Cytoplasmic side of the membrane. A helical transmembrane segment spans residues 218–238 (LYTIIFGESLLNDAISIVMFE). At 239–258 (TCQKFHGQPATFSSVFEGAG) the chain is on the lumenal side. A helical transmembrane segment spans residues 259–279 (LFLMTFSVSLLIGVLIGILVA). The Cytoplasmic portion of the chain corresponds to 280–288 (LLLKHTHIR). Residues 289-308 (RYPQIESCLILLIAYESYFF) traverse the membrane as a helical segment. Residues 309–313 (SNGCH) lie on the Lumenal side of the membrane. Residues 314–333 (MSGIVSLLFCGITLKHYAYY) form a helical membrane-spanning segment. Residues 334-344 (NMSRRSQITIK) are Cytoplasmic-facing. A helical membrane pass occupies residues 345 to 364 (YIFQLLARLSENFIFIYLGL). Residues 365 to 376 (ELFTEVELVYKP) lie on the Cytoplasmic side of the membrane. The chain crosses the membrane as a helical span at residues 377–397 (LLIIVAAISICVARWCAVFPL). Over 398 to 431 (SQFVNWIYRVKTIRSMSGITGENISVPDEIPYNY) the chain is Lumenal. Asn420 carries N-linked (GlcNAc...) asparagine glycosylation. The chain crosses the membrane as a helical span at residues 432–452 (QMMTFWAGLRGAVGVALALGI). Residues 453–457 (QGEYK) lie on the Cytoplasmic side of the membrane. A helical membrane pass occupies residues 458-478 (FTLLATVLVVVVLTVIIFGGT). Residue Thr490 is modified to Phosphothreonine. At Ser494 the chain carries Phosphoserine. Thr498 is subject to Phosphothreonine. Phosphoserine is present on Ser499. Asn515, Asn550, and Asn563 each carry an N-linked (GlcNAc...) asparagine glycan. Residues 553-578 (TTGGNTFGGLNETENTSPNPARSSMD) are disordered. A compositionally biased stretch (polar residues) spans 564 to 574 (ETENTSPNPAR). Residue Ser569 is modified to Phosphoserine.

It belongs to the monovalent cation:proton antiporter 1 (CPA1) transporter (TC 2.A.36) family. As to quaternary structure, interacts with CYP6.

Its subcellular location is the endosome membrane. The protein resides in the prevacuolar compartment membrane. In terms of biological role, endosomal/prevacuolar electroneutral Na(+)/H(+) exchanger which mediates intracellular sequestration of Na(+) cations, regulates vacuolar pH and contributes to osmotolerance following sudden exposure to hyperosmotic media. Also contributes to the postdiauxic/stationary phase resistance to osmotic stress and allows for the continued growth of cells until the acquired osmotolerance response can occur. Involved in hygromycin resistance probably through its influence on the electrochemical proton gradient affecting secondarily the entrance of hygromycin. Mediates pH-dependent vesicle trafficking out of the endosome. Contributes to K(+) sequestration and homeostasis. This chain is Endosomal/prevacuolar sodium/hydrogen exchanger (NHX1), found in Saccharomyces cerevisiae (strain ATCC 204508 / S288c) (Baker's yeast).